The sequence spans 131 residues: Synaptobrevin-like protein (131 aa).

Topologically, residues 1–81 (MLHITTMTDK…KRKFWWKNCK (81 aa)) are cytoplasmic. In terms of domain architecture, v-SNARE coiled-coil homology spans 18 to 78 (RLQQTQAQVN…GKLKRKFWWK (61 aa)). Residues 82-102 (MLAVLGVLVVILIIVLIVWVV) traverse the membrane as a helical; Anchor for type IV membrane protein segment. The Vesicular portion of the chain corresponds to 103–131 (SEQKNKVEQSEHSSHHLVMDNSSHLLSEQ). Positions 112 to 131 (SEHSSHHLVMDNSSHLLSEQ) are disordered. The segment covering 122–131 (DNSSHLLSEQ) has biased composition (polar residues).

It belongs to the synaptobrevin family.

The protein resides in the cytoplasmic vesicle. It localises to the secretory vesicle. Its subcellular location is the synaptic vesicle membrane. It is found in the synapse. The protein localises to the synaptosome. In terms of biological role, unknown, but synaptobrevins are presumed to be involved in targeting and fusion of synaptic vesicles with the presynaptic membrane as well as in neurotransmitter release. This Schistosoma mansoni (Blood fluke) protein is Synaptobrevin-like protein.